A 360-amino-acid polypeptide reads, in one-letter code: Phosphoserine aminotransferase (360 aa).

Arg-43 contacts L-glutamate. Pyridoxal 5'-phosphate contacts are provided by residues 77–78, Trp-103, Thr-152, Asp-172, and Gln-195; that span reads AS. N6-(pyridoxal phosphate)lysine is present on Lys-196. Position 237 to 238 (237 to 238) interacts with pyridoxal 5'-phosphate; that stretch reads NT.

This sequence belongs to the class-V pyridoxal-phosphate-dependent aminotransferase family. SerC subfamily. Homodimer. It depends on pyridoxal 5'-phosphate as a cofactor.

It localises to the cytoplasm. The catalysed reaction is O-phospho-L-serine + 2-oxoglutarate = 3-phosphooxypyruvate + L-glutamate. It catalyses the reaction 4-(phosphooxy)-L-threonine + 2-oxoglutarate = (R)-3-hydroxy-2-oxo-4-phosphooxybutanoate + L-glutamate. The protein operates within amino-acid biosynthesis; L-serine biosynthesis; L-serine from 3-phospho-D-glycerate: step 2/3. It functions in the pathway cofactor biosynthesis; pyridoxine 5'-phosphate biosynthesis; pyridoxine 5'-phosphate from D-erythrose 4-phosphate: step 3/5. Functionally, catalyzes the reversible conversion of 3-phosphohydroxypyruvate to phosphoserine and of 3-hydroxy-2-oxo-4-phosphonooxybutanoate to phosphohydroxythreonine. The sequence is that of Phosphoserine aminotransferase from Syntrophobacter fumaroxidans (strain DSM 10017 / MPOB).